Here is a 243-residue protein sequence, read N- to C-terminus: UPF0688 protein C1orf174 (243 aa).

Disordered regions lie at residues 78 to 100 (NDSA…AEGS) and 132 to 243 (LAKT…DAEM). Residues 145–157 (SAGSGAEESNSSS) are compositionally biased toward low complexity. Phosphoserine occurs at positions 148 and 189. Acidic residues predominate over residues 233-243 (DDDDDDDDAEM).

The protein belongs to the UPF0688 family.

It localises to the nucleus. The chain is UPF0688 protein C1orf174 (C1orf174) from Homo sapiens (Human).